The following is a 430-amino-acid chain: Aspartate aminotransferase, mitochondrial (430 aa).

The N-terminal 29 residues, 1 to 29, are a transit peptide targeting the mitochondrion; it reads MALLHSGRVLPGIAAAFHPGLAAAASARA. T48 carries the post-translational modification Phosphothreonine. Residue K59 is modified to N6-acetyllysine. Position 65 (G65) interacts with substrate. K73 is modified (N6-acetyllysine; alternate). K73 is subject to N6-succinyllysine; alternate. K82 carries the N6-acetyllysine modification. K90 is subject to N6-acetyllysine; alternate. An N6-succinyllysine; alternate modification is found at K90. Y96 carries the 3'-nitrotyrosine; alternate modification. The residue at position 96 (Y96) is a Phosphotyrosine; alternate. An N6-acetyllysine; alternate mark is found at K107 and K122. An N6-succinyllysine; alternate mark is found at K107 and K122. S143 bears the Phosphoserine mark. Position 159 is an N6-acetyllysine; alternate (K159). K159 is modified (N6-succinyllysine; alternate). Position 162 (W162) interacts with substrate. At K185 the chain carries N6-acetyllysine; alternate. K185 carries the post-translational modification N6-succinyllysine; alternate. N215 contributes to the substrate binding site. Residue K227 is modified to N6-succinyllysine. K234 carries the post-translational modification N6-acetyllysine. N6-acetyllysine; alternate is present on residues K279 and K296. K279 is subject to N6-(pyridoxal phosphate)lysine; alternate. K296 bears the N6-succinyllysine; alternate mark. K302 carries the post-translational modification N6-acetyllysine. K309 bears the N6-acetyllysine; alternate mark. K309 carries the post-translational modification N6-succinyllysine; alternate. An Asymmetric dimethylarginine modification is found at R313. T333 carries the post-translational modification Phosphothreonine. K338 carries the N6-acetyllysine; alternate modification. K338 carries the post-translational modification N6-succinyllysine; alternate. An N6-acetyllysine modification is found at K345. K363 is subject to N6-acetyllysine; alternate. Residue K363 is modified to N6-succinyllysine; alternate. 2 positions are modified to N6-acetyllysine: K364 and K387. N6-acetyllysine; alternate is present on residues K396 and K404. N6-succinyllysine; alternate is present on residues K396 and K404. R407 is a binding site for substrate.

It belongs to the class-I pyridoxal-phosphate-dependent aminotransferase family. Homodimer. It depends on pyridoxal 5'-phosphate as a cofactor.

The protein localises to the mitochondrion matrix. It localises to the cell membrane. It catalyses the reaction L-aspartate + 2-oxoglutarate = oxaloacetate + L-glutamate. It carries out the reaction L-kynurenine + 2-oxoglutarate = kynurenate + L-glutamate + H2O. Its function is as follows. Catalyzes the irreversible transamination of the L-tryptophan metabolite L-kynurenine to form kynurenic acid (KA). As a member of the malate-aspartate shuttle, it has a key role in the intracellular NAD(H) redox balance. Is important for metabolite exchange between mitochondria and cytosol, and for amino acid metabolism. Facilitates cellular uptake of long-chain free fatty acids. This chain is Aspartate aminotransferase, mitochondrial, found in Homo sapiens (Human).